The chain runs to 493 residues: Glycylpeptide N-tetradecanoyltransferase (493 aa).

45–48 (HKFW) is a tetradecanoyl-CoA binding site. Residues 53–73 (VPQITGSGAPAPIEEGPIDDP) are disordered. Residues 182-184 (LCV) and 190-194 (SKRLA) each bind tetradecanoyl-CoA. The Proton acceptor; via carboxylate role is filled by L493.

The protein belongs to the NMT family. Monomer.

Its subcellular location is the cytoplasm. It carries out the reaction N-terminal glycyl-[protein] + tetradecanoyl-CoA = N-tetradecanoylglycyl-[protein] + CoA + H(+). Adds a myristoyl group to the N-terminal glycine residue of certain cellular proteins. The protein is Glycylpeptide N-tetradecanoyltransferase of Cryptococcus neoformans var. neoformans serotype D (strain B-3501A) (Filobasidiella neoformans).